The chain runs to 161 residues: Phage-like element PBSX protein XkdI (161 aa).

The protein to B.subtilis YqbI.

The polypeptide is Phage-like element PBSX protein XkdI (xkdI) (Bacillus subtilis (strain 168)).